A 257-amino-acid chain; its full sequence is Small ribosomal subunit protein uS4c (257 aa).

2 consecutive S4 RNA-binding domains span residues 110-170 and 189-255; these read MRLD…QLVN and KTLP…KNYL.

Belongs to the universal ribosomal protein uS4 family. As to quaternary structure, part of the 30S ribosomal subunit. Contacts protein S5. The interaction surface between S4 and S5 is involved in control of translational fidelity.

Its subcellular location is the plastid. The protein resides in the chloroplast. Its function is as follows. One of the primary rRNA binding proteins, it binds directly to 16S rRNA where it nucleates assembly of the body of the 30S subunit. Functionally, with S5 and S12 plays an important role in translational accuracy. The protein is Small ribosomal subunit protein uS4c (rps4) of Chlamydomonas reinhardtii (Chlamydomonas smithii).